The primary structure comprises 235 residues: Class B acid phosphatase (235 aa).

Positions 1–22 are cleaved as a signal peptide; the sequence is MKNLVKLSLIAMLTAATLPAMA. Asp67 acts as the Nucleophile in catalysis. Positions 67 and 69 each coordinate Mg(2+). Asp69 (proton donor) is an active-site residue. Substrate is bound by residues 135–136 and Lys175; that span reads TG. Asp190 lines the Mg(2+) pocket.

This sequence belongs to the class B bacterial acid phosphatase family. In terms of assembly, homotetramer. Mg(2+) is required as a cofactor.

Its subcellular location is the periplasm. It catalyses the reaction a phosphate monoester + H2O = an alcohol + phosphate. Dephosphorylates several organic phosphate monoesters. Also has a phosphotransferase activity catalyzing the transfer of low-energy phosphate groups from organic phosphate monoesters to free hydroxyl groups of various organic compounds. This chain is Class B acid phosphatase, found in Aggregatibacter actinomycetemcomitans serotype C (strain D11S-1) (Actinobacillus actinomycetemcomitans).